A 564-amino-acid polypeptide reads, in one-letter code: NAD-dependent malic enzyme (564 aa).

The Proton donor role is filled by Tyr102. Arg155 contributes to the NAD(+) binding site. Catalysis depends on Lys173, which acts as the Proton acceptor. Residues Glu244, Asp245, and Asp268 each contribute to the a divalent metal cation site. Residues Asp268 and Asn417 each coordinate NAD(+).

Belongs to the malic enzymes family. In terms of assembly, homotetramer. Requires Mg(2+) as cofactor. It depends on Mn(2+) as a cofactor.

It carries out the reaction (S)-malate + NAD(+) = pyruvate + CO2 + NADH. The catalysed reaction is oxaloacetate + H(+) = pyruvate + CO2. This Pseudomonas aeruginosa (strain UCBPP-PA14) protein is NAD-dependent malic enzyme.